The sequence spans 677 residues: Methionine--tRNA ligase (677 aa).

The 'HIGH' region motif lies at 15–25 (PYANGSIHLGH). Positions 146, 149, 159, and 162 each coordinate Zn(2+). Positions 333 to 337 (KMSKS) match the 'KMSKS' region motif. Lys-336 provides a ligand contact to ATP. Positions 575 to 677 (DFAKVDLRVA…AGAKPGHQVK (103 aa)) constitute a tRNA-binding domain.

This sequence belongs to the class-I aminoacyl-tRNA synthetase family. MetG type 1 subfamily. Homodimer. The cofactor is Zn(2+).

The protein localises to the cytoplasm. The enzyme catalyses tRNA(Met) + L-methionine + ATP = L-methionyl-tRNA(Met) + AMP + diphosphate. Its function is as follows. Is required not only for elongation of protein synthesis but also for the initiation of all mRNA translation through initiator tRNA(fMet) aminoacylation. In Shigella flexneri serotype 5b (strain 8401), this protein is Methionine--tRNA ligase.